Reading from the N-terminus, the 100-residue chain is Toxin ParE3 (100 aa).

It belongs to the RelE toxin family.

In terms of biological role, toxic component of a type II toxin-antitoxin (TA) system. Its toxic effect is neutralized by coexpression with cognate antitoxin ParD3 but no other ParD or RelB antitoxin. The protein is Toxin ParE3 (parE3) of Caulobacter vibrioides (strain ATCC 19089 / CIP 103742 / CB 15) (Caulobacter crescentus).